The sequence spans 418 residues: Methionine aminopeptidase 2 (418 aa).

Residues V18–G49 form a disordered region. Positions K38–G49 are enriched in basic residues. A substrate-binding site is contributed by H172. D192, D203, and H272 together coordinate a divalent metal cation. H280 is a binding site for substrate. 2 residues coordinate a divalent metal cation: E305 and E399.

It belongs to the peptidase M24A family. Methionine aminopeptidase eukaryotic type 2 subfamily. It depends on Co(2+) as a cofactor. Requires Zn(2+) as cofactor. Mn(2+) is required as a cofactor. Fe(2+) serves as cofactor.

Its subcellular location is the cytoplasm. It carries out the reaction Release of N-terminal amino acids, preferentially methionine, from peptides and arylamides.. Cotranslationally removes the N-terminal methionine from nascent proteins. The N-terminal methionine is often cleaved when the second residue in the primary sequence is small and uncharged (Met-Ala-, Cys, Gly, Pro, Ser, Thr, or Val). The sequence is that of Methionine aminopeptidase 2 from Kluyveromyces lactis (strain ATCC 8585 / CBS 2359 / DSM 70799 / NBRC 1267 / NRRL Y-1140 / WM37) (Yeast).